The chain runs to 141 residues: Large ribosomal subunit protein uL16c (141 aa).

Belongs to the universal ribosomal protein uL16 family. As to quaternary structure, part of the 50S ribosomal subunit.

Its subcellular location is the plastid. It localises to the chloroplast. In Zygnema circumcarinatum (Green alga), this protein is Large ribosomal subunit protein uL16c.